Reading from the N-terminus, the 83-residue chain is Small ribosomal subunit protein bS18 (83 aa).

Belongs to the bacterial ribosomal protein bS18 family. Part of the 30S ribosomal subunit. Forms a tight heterodimer with protein bS6.

Functionally, binds as a heterodimer with protein bS6 to the central domain of the 16S rRNA, where it helps stabilize the platform of the 30S subunit. The sequence is that of Small ribosomal subunit protein bS18 from Methylobacterium sp. (strain 4-46).